A 476-amino-acid polypeptide reads, in one-letter code: Cytochrome c oxidase subunit 1 (476 aa).

Residues 19–39 (LYYLWFSFLFGSYGFLLSVIL) traverse the membrane as a helical segment. Glu-42 serves as a coordination point for Ca(2+). Transmembrane regions (helical) follow at residues 61-81 (MIFTIHGIIMIFFNIMPGLFG), 105-125 (ISLLLQPIAFVLVILSTAAEF), 151-171 (VIIFGLLVSGVASIMSSLNFI), 194-214 (LIITSGMLLLTLPVLTGGVLM), 240-260 (LFWFFGHPEVYILILPAFGVI), 278-298 (MILAMGCIAVLGSLVWVHHMY), 310-330 (FTSTTILISIPTGTKVFNWIC), and 345-365 (LLSLLFICTFTFGGTTGVILG). His-66 contacts Fe(II)-heme a. His-246 lines the Cu cation pocket. Residues 246–250 (HPEVY) constitute a cross-link (1'-histidyl-3'-tyrosine (His-Tyr)). Tyr-250 serves as a coordination point for O2. Positions 295 and 296 each coordinate Cu cation. Mg(2+) contacts are provided by His-374 and Asp-375. 2 consecutive transmembrane segments (helical) span residues 379–399 (VIAHFHFVLSIGAIIGLFTTV) and 415–435 (SIVILWSMLFFVGVILTFLPM). His-382 contributes to the heme a3 binding site. His-384 lines the Fe(II)-heme a pocket. Pro-448 lines the Ca(2+) pocket. Residues 455-475 (NGWNMICSIGSTMTLFGLLIF) form a helical membrane-spanning segment.

It belongs to the heme-copper respiratory oxidase family. As to quaternary structure, component of the cytochrome c oxidase (complex IV, CIV), a multisubunit enzyme composed of a catalytic core of 3 subunits and several supernumerary subunits. The complex exists as a monomer or a dimer and forms supercomplexes (SCs) in the inner mitochondrial membrane with ubiquinol-cytochrome c oxidoreductase (cytochrome b-c1 complex, complex III, CIII). Heme is required as a cofactor. It depends on Cu cation as a cofactor.

It localises to the mitochondrion inner membrane. The enzyme catalyses 4 Fe(II)-[cytochrome c] + O2 + 8 H(+)(in) = 4 Fe(III)-[cytochrome c] + 2 H2O + 4 H(+)(out). It functions in the pathway energy metabolism; oxidative phosphorylation. In terms of biological role, component of the cytochrome c oxidase, the last enzyme in the mitochondrial electron transport chain which drives oxidative phosphorylation. The respiratory chain contains 3 multisubunit complexes succinate dehydrogenase (complex II, CII), ubiquinol-cytochrome c oxidoreductase (cytochrome b-c1 complex, complex III, CIII) and cytochrome c oxidase (complex IV, CIV), that cooperate to transfer electrons derived from NADH and succinate to molecular oxygen, creating an electrochemical gradient over the inner membrane that drives transmembrane transport and the ATP synthase. Cytochrome c oxidase is the component of the respiratory chain that catalyzes the reduction of oxygen to water. Electrons originating from reduced cytochrome c in the intermembrane space (IMS) are transferred via the dinuclear copper A center (CU(A)) of subunit 2 and heme A of subunit 1 to the active site in subunit 1, a binuclear center (BNC) formed by heme A3 and copper B (CU(B)). The BNC reduces molecular oxygen to 2 water molecules using 4 electrons from cytochrome c in the IMS and 4 protons from the mitochondrial matrix. The sequence is that of Cytochrome c oxidase subunit 1 (MT-CO1) from Plasmodium falciparum.